The sequence spans 297 residues: MNKAQGTIVSAISGYYDVEIENEVVRTRARGVFRDRKQKPLVGDRVVVQLDNQGMNYLIEILPRTNEIGRPAVANVSKVLLVISAVEPDFSLELLDRYLTFFAWKNVGVVIYLSKADITPTEKLKAIKCKLDYYQKIGYSVFEDAEELERQLPTMIQKDQIWTLAGQSGAGKSTLLNKLENEANQETGAISTALNRGKHTTRQVKLFKYSSGFIADTPGFSAIDLFKIKVDELENYFYDLKDASVKCKFRRCQHIKEPGCEVKKLIEEGKIAKSRYDSYLKIRQEISENRMPEYLKK.

Residues 65 to 223 (TNEIGRPAVA…IADTPGFSAI (159 aa)) form the CP-type G domain. Residues 114 to 117 (SKAD) and 166 to 174 (GQSGAGKST) contribute to the GTP site. Residues cysteine 247, cysteine 252, histidine 254, and cysteine 260 each contribute to the Zn(2+) site.

The protein belongs to the TRAFAC class YlqF/YawG GTPase family. RsgA subfamily. Monomer. Associates with 30S ribosomal subunit, binds 16S rRNA. Requires Zn(2+) as cofactor.

It is found in the cytoplasm. One of several proteins that assist in the late maturation steps of the functional core of the 30S ribosomal subunit. Helps release RbfA from mature subunits. May play a role in the assembly of ribosomal proteins into the subunit. Circularly permuted GTPase that catalyzes slow GTP hydrolysis, GTPase activity is stimulated by the 30S ribosomal subunit. This is Small ribosomal subunit biogenesis GTPase RsgA from Lactobacillus gasseri (strain ATCC 33323 / DSM 20243 / BCRC 14619 / CIP 102991 / JCM 1131 / KCTC 3163 / NCIMB 11718 / NCTC 13722 / AM63).